The following is a 474-amino-acid chain: UDP-glycosyltransferase 71E1 (474 aa).

UDP-alpha-D-glucose contacts are provided by residues S275, 341-342 (WA), 359-367 (HCGWNSTLE), and 381-384 (YAEQ).

It belongs to the UDP-glycosyltransferase family.

In terms of biological role, may glycosylate diterpenes or flavonols in leaves. The chain is UDP-glycosyltransferase 71E1 from Stevia rebaudiana (Stevia).